Reading from the N-terminus, the 155-residue chain is Small ribosomal subunit protein uS7cz/uS7cy (155 aa).

It belongs to the universal ribosomal protein uS7 family. Part of the 30S ribosomal subunit.

It localises to the plastid. In terms of biological role, one of the primary rRNA binding proteins, it binds directly to 16S rRNA where it nucleates assembly of the head domain of the 30S subunit. The chain is Small ribosomal subunit protein uS7cz/uS7cy (rps7-A) from Epifagus virginiana (Beechdrops).